Here is a 339-residue protein sequence, read N- to C-terminus: Tetraacyldisaccharide 4'-kinase (339 aa).

58–65 (TVGGSGKT) provides a ligand contact to ATP.

This sequence belongs to the LpxK family.

The catalysed reaction is a lipid A disaccharide + ATP = a lipid IVA + ADP + H(+). It participates in glycolipid biosynthesis; lipid IV(A) biosynthesis; lipid IV(A) from (3R)-3-hydroxytetradecanoyl-[acyl-carrier-protein] and UDP-N-acetyl-alpha-D-glucosamine: step 6/6. Functionally, transfers the gamma-phosphate of ATP to the 4'-position of a tetraacyldisaccharide 1-phosphate intermediate (termed DS-1-P) to form tetraacyldisaccharide 1,4'-bis-phosphate (lipid IVA). The protein is Tetraacyldisaccharide 4'-kinase of Shewanella baltica (strain OS195).